Here is a 659-residue protein sequence, read N- to C-terminus: Crossover junction endonuclease MUS81 (659 aa).

Positions 59–78 (KDLSQIKGFGKWMVKLMKGY) match the Helix-hairpin-helix motif 1 motif. Residues 404–503 (ILILDDREKF…KKLIYILEGD (100 aa)) enclose the ERCC4 domain. Positions 585–622 (TISDVFAIQLMQVPQVTEEIAIAVLDMYPTLLSLASAY) match the Helix-hairpin-helix motif 2 motif.

This sequence belongs to the XPF family. As to quaternary structure, forms a heterodimer with EME1A or EME1B. It depends on Mg(2+) as a cofactor. Requires Ca(2+) as cofactor. In terms of tissue distribution, ubiquitous but preferentially expressed in young flowers buds, notably in anthers.

Its subcellular location is the nucleus. It localises to the nucleolus. In terms of biological role, interacts with EME1 to form a DNA structure-specific endonuclease with substrate preference for branched DNA structures with a 5'-end at the branch nick. Typical substrates include 3'-flap structures, D-loops, replication forks, nicked Holliday junctions and also intact Holliday junctions with a reduced efficiency. May be required in mitosis for the processing of stalled or collapsed replication fork intermediates. Plays a role in DNA repair and in genotoxic stress-induced homologous recombination (HR) in somatic cells. Mediates a subset of meiotic recombination events that are insensitive to crossover interference. Together with SEND1, essential for the resolution of toxic replication structures to ensure genome stability, and to maintain telomere integrity and replication. The sequence is that of Crossover junction endonuclease MUS81 from Arabidopsis thaliana (Mouse-ear cress).